The primary structure comprises 302 residues: Epoxyqueuosine reductase (302 aa).

D128 serves as the catalytic Proton donor. Positions 170-202 constitute a 4Fe-4S ferredoxin-type 1 domain; it reads LPLQADGPIRDYCGTCTACIDACPTDAITPYEV. Residues C182, C185, C188, C192, C207, C234, C237, and C241 each coordinate [4Fe-4S] cluster. In terms of domain architecture, 4Fe-4S ferredoxin-type 2 spans 221 to 251; that stretch reads NEFKGKMENWIFGCDICQDVCPWNSFARPHS.

Belongs to the QueG family. As to quaternary structure, monomer. Cob(II)alamin is required as a cofactor. [4Fe-4S] cluster serves as cofactor.

The protein resides in the cytoplasm. It catalyses the reaction epoxyqueuosine(34) in tRNA + AH2 = queuosine(34) in tRNA + A + H2O. The protein operates within tRNA modification; tRNA-queuosine biosynthesis. Catalyzes the conversion of epoxyqueuosine (oQ) to queuosine (Q), which is a hypermodified base found in the wobble positions of tRNA(Asp), tRNA(Asn), tRNA(His) and tRNA(Tyr). The chain is Epoxyqueuosine reductase from Leadbetterella byssophila (strain DSM 17132 / JCM 16389 / KACC 11308 / NBRC 106382 / 4M15).